Reading from the N-terminus, the 300-residue chain is tRNA uridine(34) hydroxylase (300 aa).

One can recognise a Rhodanese domain in the interval Ala128–Ser222. Cys182 serves as the catalytic Cysteine persulfide intermediate.

This sequence belongs to the TrhO family.

The catalysed reaction is uridine(34) in tRNA + AH2 + O2 = 5-hydroxyuridine(34) in tRNA + A + H2O. In terms of biological role, catalyzes oxygen-dependent 5-hydroxyuridine (ho5U) modification at position 34 in tRNAs. This is tRNA uridine(34) hydroxylase from Deinococcus radiodurans (strain ATCC 13939 / DSM 20539 / JCM 16871 / CCUG 27074 / LMG 4051 / NBRC 15346 / NCIMB 9279 / VKM B-1422 / R1).